Here is a 240-residue protein sequence, read N- to C-terminus: Fimbriae Y protein (240 aa).

It localises to the fimbrium. The protein is Fimbriae Y protein (fimY) of Salmonella typhimurium (strain LT2 / SGSC1412 / ATCC 700720).